Reading from the N-terminus, the 546-residue chain is uncharacterized protein (546 aa).

The next 9 membrane-spanning stretches (helical) occupy residues 27 to 46 (EALVLLSILFFVPGIFPFVF), 59 to 78 (NGLIQCYPVAAFFAVLALVT), 83 to 100 (FALIWWMYTVFNALYAIL), 114 to 134 (SVLFGLIYLAGGGFWFFAYAA), 143 to 163 (PLIILLTAVHFHYSAFLIPIF), 176 to 196 (MLYSWITWVILLSPLLIALGI), 204 to 224 (VIAVSIYMAAIYLHAFLVFTA), 237 to 257 (LSSAVLMITIAFSMIYSFGVF), and 268 to 288 (MIWIHGFVNAFGVILPALIGW).

The protein resides in the cell membrane. This is an uncharacterized protein from Bacillus subtilis (strain 168).